Here is a 305-residue protein sequence, read N- to C-terminus: Glutaminase (305 aa).

7 residues coordinate substrate: S61, N113, E158, N165, Y189, Y241, and V259.

It belongs to the glutaminase family. As to quaternary structure, homotetramer.

It carries out the reaction L-glutamine + H2O = L-glutamate + NH4(+). The sequence is that of Glutaminase from Alkaliphilus metalliredigens (strain QYMF).